Reading from the N-terminus, the 275-residue chain is Phosphonoacetaldehyde hydrolase (275 aa).

Asp-15 acts as the Nucleophile in catalysis. Residues Asp-15 and Ala-17 each coordinate Mg(2+). Lys-56 acts as the Schiff-base intermediate with substrate in catalysis. Asp-189 serves as a coordination point for Mg(2+).

The protein belongs to the HAD-like hydrolase superfamily. PhnX family. As to quaternary structure, homodimer. It depends on Mg(2+) as a cofactor.

It catalyses the reaction phosphonoacetaldehyde + H2O = acetaldehyde + phosphate + H(+). Its function is as follows. Involved in phosphonate degradation. The sequence is that of Phosphonoacetaldehyde hydrolase from Pseudomonas paraeruginosa (strain DSM 24068 / PA7) (Pseudomonas aeruginosa (strain PA7)).